Reading from the N-terminus, the 95-residue chain is Small ribosomal subunit protein uS15 (95 aa).

The protein belongs to the universal ribosomal protein uS15 family. In terms of assembly, part of the 30S ribosomal subunit. Forms a bridge to the 50S subunit in the 70S ribosome, contacting the 23S rRNA.

One of the primary rRNA binding proteins, it binds directly to 16S rRNA where it helps nucleate assembly of the platform of the 30S subunit by binding and bridging several RNA helices of the 16S rRNA. In terms of biological role, forms an intersubunit bridge (bridge B4) with the 23S rRNA of the 50S subunit in the ribosome. This Sulfurihydrogenibium sp. (strain YO3AOP1) protein is Small ribosomal subunit protein uS15.